The following is a 155-amino-acid chain: MQNLEGSGDGQQVEMWTDGACKGNPGPGGWGVLMRAGQHEKTMHGGERQTTNNRMELMAVIEGLRALKRPCRVTIHTDSQYVMKGMTEWLANWKRRGWRTADKKPVKNVELWQALDEQVGRHQVQWRWVRGHAGDPGNERADALANQGMEAARGR.

In terms of domain architecture, RNase H type-1 spans D9–E150. Residues D18, E56, D78, and D142 each coordinate Mg(2+).

It belongs to the RNase H family. Monomer. Mg(2+) serves as cofactor.

The protein localises to the cytoplasm. The catalysed reaction is Endonucleolytic cleavage to 5'-phosphomonoester.. Its function is as follows. Endonuclease that specifically degrades the RNA of RNA-DNA hybrids. This Bordetella pertussis (strain Tohama I / ATCC BAA-589 / NCTC 13251) protein is Ribonuclease H.